Reading from the N-terminus, the 1222-residue chain is Chitin synthase 4 (1222 aa).

The interval 1–108 is disordered; sequence MSLPERPGGI…NRIDKDHPNY (108 aa). Over residues 51-68 the composition is skewed to polar residues; it reads LSANSFAETIPSPNNSFV. N64 carries N-linked (GlcNAc...) asparagine glycosylation. The segment covering 94-107 has biased composition (basic and acidic residues); sequence IRPERNRIDKDHPN. N116 is a glycosylation site (N-linked (GlcNAc...) asparagine). The tract at residues 136 to 199 is disordered; it reads TTDVSGSRSQ…KSTKKRSTPQ (64 aa). Positions 137–154 are enriched in polar residues; sequence TDVSGSRSQTLDGVSDTS. Residues 176 to 196 are compositionally biased toward basic residues; it reads SAKRVSRHKSGKITKSTKKRS. Transmembrane regions (helical) follow at residues 204–224 and 242–262; these read PPSFWNVYCAIITFWCPDFML and MGLISLILLIMGCVGFITFGF. N378 and N418 each carry an N-linked (GlcNAc...) asparagine glycan. The chain crosses the membrane as a helical span at residues 509–529; that stretch reads YVFLALILSVVGSRFVLALIF. Residues 595–662 are disordered; sequence RFSTVYGPDR…PPSDGPGPAG (68 aa). Residues 608–643 are compositionally biased toward polar residues; the sequence is NKRVPTTMASSGGSGSQLLHPNSMYRQGNDSRSSFL. Residues N636 and N1031 are each glycosylated (N-linked (GlcNAc...) asparagine). Helical transmembrane passes span 1056 to 1076, 1090 to 1110, and 1116 to 1136; these read FIVFVELMGTLVLPAAIAFTF, VIPLILLALILGLPAVLIVIT, and YLVWMMIYLFSLPVWNFVLPV. The tract at residues 1201–1222 is disordered; the sequence is GGGNSWSMPPGHQYHDDYYSDA. The segment covering 1213–1222 has biased composition (basic and acidic residues); the sequence is QYHDDYYSDA.

It belongs to the chitin synthase family. Class IV subfamily.

Its subcellular location is the cell membrane. It catalyses the reaction [(1-&gt;4)-N-acetyl-beta-D-glucosaminyl](n) + UDP-N-acetyl-alpha-D-glucosamine = [(1-&gt;4)-N-acetyl-beta-D-glucosaminyl](n+1) + UDP + H(+). Its function is as follows. Polymerizes chitin, a structural polymer of the cell wall and septum, by transferring the sugar moiety of UDP-GlcNAc to the non-reducing end of the growing chitin polymer. Plays a role in cell wall integrity and is involved in tolerance to hyperosmotic conditions. Required to successfully penetrate the host plants and thus plays a key role in pathogenicity. The protein is Chitin synthase 4 of Verticillium dahliae (strain VdLs.17 / ATCC MYA-4575 / FGSC 10137) (Verticillium wilt).